Reading from the N-terminus, the 565-residue chain is CTP synthase (565 aa).

Residues 1 to 272 (MARPKNVKHI…DLRVMKKLGL (272 aa)) form an amidoligase domain region. Serine 18 is a CTP binding site. Serine 18 is a binding site for UTP. Position 19–24 (19–24 (SLGKGI)) interacts with ATP. L-glutamine is bound at residue tyrosine 59. Residue aspartate 76 participates in ATP binding. Mg(2+)-binding residues include aspartate 76 and glutamate 146. CTP contacts are provided by residues 153 to 155 (DIE), 193 to 198 (KTKPTQ), and lysine 229. UTP contacts are provided by residues 193–198 (KTKPTQ) and lysine 229. The region spanning 299 to 543 (TIGICGKYTE…VHAAKEFAQG (245 aa)) is the Glutamine amidotransferase type-1 domain. Glycine 363 contacts L-glutamine. The Nucleophile; for glutamine hydrolysis role is filled by cysteine 390. Residues 391 to 394 (LGMQ), glutamate 414, and arginine 471 each bind L-glutamine. Residues histidine 516 and glutamate 518 contribute to the active site.

Belongs to the CTP synthase family. Homotetramer.

It catalyses the reaction UTP + L-glutamine + ATP + H2O = CTP + L-glutamate + ADP + phosphate + 2 H(+). The enzyme catalyses L-glutamine + H2O = L-glutamate + NH4(+). The catalysed reaction is UTP + NH4(+) + ATP = CTP + ADP + phosphate + 2 H(+). It functions in the pathway pyrimidine metabolism; CTP biosynthesis via de novo pathway; CTP from UDP: step 2/2. With respect to regulation, allosterically activated by GTP, when glutamine is the substrate; GTP has no effect on the reaction when ammonia is the substrate. The allosteric effector GTP functions by stabilizing the protein conformation that binds the tetrahedral intermediate(s) formed during glutamine hydrolysis. Inhibited by the product CTP, via allosteric rather than competitive inhibition. Catalyzes the ATP-dependent amination of UTP to CTP with either L-glutamine or ammonia as the source of nitrogen. Regulates intracellular CTP levels through interactions with the four ribonucleotide triphosphates. The protein is CTP synthase of Chlorobaculum tepidum (strain ATCC 49652 / DSM 12025 / NBRC 103806 / TLS) (Chlorobium tepidum).